The sequence spans 1136 residues: MFSPRGTPGSGRRQAPRTGGRRSVSAVQPGLLFSPRRSAVTARSTPTRVQSHAVVESYNFDVQTFGSSLPVKVMEALTMADVDDQISVKVEASGWAWMVCGERLIVWKVSQTSVAKLSVCKDLQLPSSEFAYSADLVSISSSGPLDLAPIQSISVLAVSPDGLVRFWPSLAHEGSYTEISLDLSGHLSNYVAAVKGGSFIVSSYRGHLLRLSADSSGKLHHRPVQQGQGMLSGIGRRVSSLFGIRGQPADLSVFSVLWVKASSCLYSLSSCGLSKWEVDENSETQVLSWSTNQIITDSITDAIWDSESNYSEIKKGVNVLYLDMQPSNAGLVVLAAAWYPGDTPCVAYFCLVTLAESIVPSPDLLTVEVTKYNPPFQSEEELLKTRLVLPDPSSPAAYLYNEELVFACSTGAGRGGLAEEKILFSSPGDRVRGGGVCADLPVFFSQNSGLVAVLARETASLLPETMEDSLCTSVAGPGPEGTPLETPPKIDMVAQEDKTKLLKQAFLQFCRHDLVGAQSMVDELFPSDGEGSADLDTVVTQIDLDLVDDYPACDPRWAESVPDEGAGFTLTSLILLHQLEDKMKAHRCLMDFLLQTGLLDRLTSTKVRSCPMATRLLLCEHAEKLSAAIVLKNHHAKHPELVNTAIQTALKKNSTDTPTNLTPADVFFREVSQISSIFECLLDEEEKALKEHPDAARWGEVVLSVNDIIKDMLQAAAQYRETKASLYRAPENCSPEPEYIPWTASGGVGGVRSVISRQHELILRAAYPHADAELRSVLCEQLVALLDSLLSGYVAQLTSLRRGGQQERYDTLENEYTQKRSELLKPLLELGQHQWVAALAEKYCDFDILVQLCERTDNQSRLQQYMVKFADQNFADFLFRWYMEKGKRGKLLSQPMATHQQLASFLQAHDHLSWLHDIHVQDYQRAHRTLYNQANMETRYFSKKKTLLALSKLTALASDMPEPVHRRQLNDIVEQERFLLHQETLPKQLLEEKQLNPDSMPLLSPQNLISLYICDENRGANEYDFKKALDLLEYFEEENGIDVDALKREIFSKALKKDWKESWSSSDDNDDPLEAARDSTFVKILQKLIQERVSLQTYLPDIKDLLQEDELESLKSKPYFEFLLRANYEHYLKVQI.

A disordered region spans residues 1-26 (MFSPRGTPGSGRRQAPRTGGRRSVSA).

The protein belongs to the nucleoporin Nup133 family. Forms part of the Nup160 subcomplex in the nuclear pore which is composed of NUP160, NUP133, NUP107 and Nup96. This complex plays a role in RNA export and in tethering Nup98 and NUP153 to the nucleus. Widely expressed in the embryo and in adult tissues. Higher expression is observed in the brain, testes, ovary, skin, and kidney.

The protein localises to the nucleus. Its subcellular location is the nuclear pore complex. It is found in the chromosome. It localises to the centromere. The protein resides in the kinetochore. Its function is as follows. Involved in poly(A)+ RNA transport. Involved in nephrogenesis. The chain is Nuclear pore complex protein Nup133 from Danio rerio (Zebrafish).